The sequence spans 399 residues: MAREKFERNKPHVNIGTIGHVDHGKTTLTAAITNVLAKKGQAQAQDYGDIDGAPEERERGITINTAHVEYETEGRHYAHVDCPGHADYVKNMITGAAQMDGAILVCAATDGPMAQTKEHILLAKQVGVPALVVALNKCDMVDDEEIIELVEMEIRELLDSYDFPGDDIPIVQVSGLKALEGDSNWESKIEELMKAVDASIPEPEREIDKPFLMAIEDVFSITGRGTVATGRIERGKVKVGEEVEIVGIRDTRLTTVTGVEMFRKLLDEGMAGDNVGLLLRGVQKEDIERGMVLVKKGSITPHTKFEGEVYVLKKEEGGRHTPFFAGYRPQFYIRTTDVTGQITAFTSDDGANVEMVMPGDRIKMTGELICPVAIEQGMRFAIREGGRTIGAGVVSKIIE.

Positions 10–204 (KPHVNIGTIG…AVDASIPEPE (195 aa)) constitute a tr-type G domain. Residues 19 to 26 (GHVDHGKT) are G1. Residue 19 to 26 (GHVDHGKT) participates in GTP binding. Threonine 26 is a Mg(2+) binding site. Positions 60–64 (GITIN) are G2. Positions 81-84 (DCPG) are G3. GTP is bound by residues 81–85 (DCPGH) and 136–139 (NKCD). The segment at 136-139 (NKCD) is G4. The G5 stretch occupies residues 174–176 (SGL).

It belongs to the TRAFAC class translation factor GTPase superfamily. Classic translation factor GTPase family. EF-Tu/EF-1A subfamily. In terms of assembly, monomer.

The protein resides in the cytoplasm. It carries out the reaction GTP + H2O = GDP + phosphate + H(+). Its function is as follows. GTP hydrolase that promotes the GTP-dependent binding of aminoacyl-tRNA to the A-site of ribosomes during protein biosynthesis. The chain is Elongation factor Tu from Prochlorococcus marinus (strain MIT 9515).